The primary structure comprises 479 residues: Something about silencing protein 10 (479 aa).

The segment covering 1 to 10 (MVGRSRRRGA) has biased composition (basic residues). Disordered regions lie at residues 1–45 (MVGR…SYYQ) and 62–166 (KGWN…EEAQ). Arg8 bears the Omega-N-methylarginine mark. The span at 11–21 (AKWAAVRAKAG) shows a compositional bias: low complexity. Phosphoserine is present on Ser37. The segment covering 69–111 (SGDEEDGEEEEEEVLALDMDDEDDEDGGNAGEEEEEENADDDG) has biased composition (acidic residues). The residue at position 144 (Lys144) is an N6-acetyllysine; alternate. A Glycyl lysine isopeptide (Lys-Gly) (interchain with G-Cter in SUMO2); alternate cross-link involves residue Lys144. Ser150 is subject to Phosphoserine. Residues 153–165 (EAEEEEREEEEEA) show a composition bias toward acidic residues. Thr362 carries the phosphothreonine modification. Residues Ser365 and Ser368 each carry the phosphoserine modification. Residue Arg385 is modified to Citrulline. The segment at 419-466 (RGLTPRRKKIDRNPRVKHREKFRRAKIRRRGQVREVRKEEQRYSGELS) is disordered. A compositionally biased stretch (basic residues) spans 422 to 449 (TPRRKKIDRNPRVKHREKFRRAKIRRRG). A compositionally biased stretch (basic and acidic residues) spans 450–461 (QVREVRKEEQRY).

It belongs to the SAS10 family. In terms of assembly, part of the small subunit (SSU) processome, composed of more than 70 proteins and the RNA chaperone small nucleolar RNA (snoRNA) U3. Post-translationally, citrullinated by PADI4.

It localises to the nucleus. The protein localises to the nucleolus. Its function is as follows. Essential for gene silencing: has a role in the structure of silenced chromatin. Plays a role in the developing brain. Part of the small subunit (SSU) processome, first precursor of the small eukaryotic ribosomal subunit. During the assembly of the SSU processome in the nucleolus, many ribosome biogenesis factors, an RNA chaperone and ribosomal proteins associate with the nascent pre-rRNA and work in concert to generate RNA folding, modifications, rearrangements and cleavage as well as targeted degradation of pre-ribosomal RNA by the RNA exosome. In Homo sapiens (Human), this protein is Something about silencing protein 10.